A 275-amino-acid chain; its full sequence is Reticulon-like protein B1 (275 aa).

Composition is skewed to basic and acidic residues over residues 1–10 (MAEEHKHDES) and 20–38 (VVER…HHGG). Positions 1 to 68 (MAEEHKHDES…PSSPSSSMKS (68 aa)) are disordered. A2 bears the N-acetylalanine mark. Over residues 59 to 68 (PSSPSSSMKS) the composition is skewed to low complexity. Residues 89–274 (PADIFMWKNK…PLGPLKNKKK (186 aa)) form the Reticulon domain. 3 helical membrane passes run 99–119 (KMSG…ELME), 120–140 (YHLL…LFLW), and 194–214 (FLIA…FNFL).

As to quaternary structure, interacts with VirB2. In terms of tissue distribution, predominantly expressed in root tissues.

The protein localises to the endoplasmic reticulum membrane. The protein resides in the cell membrane. Functionally, plays a role in the Agrobacterium-mediated plant transformation via its interaction with VirB2, the major component of the T-pilus. This is Reticulon-like protein B1 (RTNLB1) from Arabidopsis thaliana (Mouse-ear cress).